We begin with the raw amino-acid sequence, 633 residues long: Glutamyl-tRNA(Gln) amidotransferase subunit E (633 aa).

The protein belongs to the GatB/GatE family. GatE subfamily. As to quaternary structure, heterodimer of GatD and GatE.

It carries out the reaction L-glutamyl-tRNA(Gln) + L-glutamine + ATP + H2O = L-glutaminyl-tRNA(Gln) + L-glutamate + ADP + phosphate + H(+). Allows the formation of correctly charged Gln-tRNA(Gln) through the transamidation of misacylated Glu-tRNA(Gln) in organisms which lack glutaminyl-tRNA synthetase. The reaction takes place in the presence of glutamine and ATP through an activated gamma-phospho-Glu-tRNA(Gln). The GatDE system is specific for glutamate and does not act on aspartate. In Methanosarcina barkeri (strain Fusaro / DSM 804), this protein is Glutamyl-tRNA(Gln) amidotransferase subunit E.